Consider the following 673-residue polypeptide: tRNA uridine 5-carboxymethylaminomethyl modification enzyme MnmG (673 aa).

17 to 22 (GGGHAG) contacts FAD. 284–298 (GPRYCPSVEDKINRF) contacts NAD(+).

The protein belongs to the MnmG family. In terms of assembly, homodimer. Heterotetramer of two MnmE and two MnmG subunits. It depends on FAD as a cofactor.

The protein resides in the cytoplasm. Functionally, NAD-binding protein involved in the addition of a carboxymethylaminomethyl (cmnm) group at the wobble position (U34) of certain tRNAs, forming tRNA-cmnm(5)s(2)U34. This chain is tRNA uridine 5-carboxymethylaminomethyl modification enzyme MnmG, found in Polaromonas sp. (strain JS666 / ATCC BAA-500).